A 303-amino-acid chain; its full sequence is 1D-myo-inositol 2-acetamido-2-deoxy-alpha-D-glucopyranoside deacetylase 1 (303 aa).

Zn(2+) contacts are provided by H15, D18, and H157.

Belongs to the MshB deacetylase family. Requires Zn(2+) as cofactor.

The catalysed reaction is 1D-myo-inositol 2-acetamido-2-deoxy-alpha-D-glucopyranoside + H2O = 1D-myo-inositol 2-amino-2-deoxy-alpha-D-glucopyranoside + acetate. In terms of biological role, catalyzes the deacetylation of 1D-myo-inositol 2-acetamido-2-deoxy-alpha-D-glucopyranoside (GlcNAc-Ins) in the mycothiol biosynthesis pathway. In Saccharopolyspora erythraea (strain ATCC 11635 / DSM 40517 / JCM 4748 / NBRC 13426 / NCIMB 8594 / NRRL 2338), this protein is 1D-myo-inositol 2-acetamido-2-deoxy-alpha-D-glucopyranoside deacetylase 1.